The following is a 229-amino-acid chain: Matrix protein (229 aa).

Positions 2–4 (KSI) match the dynamin binding motif. The tract at residues 11–36 (AKKEKKREKKSNHGSHSMEWESPPSY) is disordered. The span at 13–23 (KEKKREKKSNH) shows a compositional bias: basic residues. Positions 33 to 36 (PPSY) match the PPXY motif motif. Residues 42–45 (PSAP) carry the PTAP/PSAP motif motif.

Belongs to the vesiculoviruses matrix protein family. Homomultimer. Interacts with viral nucleocapsid; this interaction contributes to the virion assembly. Interacts with the viral envelope glycoprotein; this interaction contributes to the virion assembly. Interacts with host RAE1-NUP98 complex. Interacts with host NEDD4 and TSG101. Interacts with host dynamin. Interacts with host NDUFAF4; the interaction inhibits viral propagation and is independent of interferon activation. Interacts with host GTF2H5; the interaction may inhibit host transcription. In terms of processing, phosphorylated by host.

It is found in the virion. The protein resides in the host endomembrane system. It localises to the host nucleus membrane. The protein localises to the host nucleus. Its subcellular location is the host cytoplasm. Its function is as follows. Forms a double layer around the helical nucleocapsid, the inner matrix layer binding to the N helix and the outer matrix layer binding to the envelope glycoprotein. Plays a major role in assembly and budding of virion, by recruiting cellular partners of the ESCRT complexes that play a key role in releasing the budding particle from the host membrane. Condensates the ribonucleocapsid core during virus assembly. Inhibits the host mRNA nuclear export thereby inducing the shut off of cellular transcription and preventing the interferon signaling and the establishment of antiviral state in infected cells. This shutoff presumably inhibits interferon signaling and thus establishment of antiviral state in virus infected cells. Induces cell-rounding, cytoskeleton disorganization and apoptosis in infected cell. Inhibits host transcription, possibly through interaction with host DNA repair factor IIH/TFIIH GTF2H5 subunit. The protein is Matrix protein (M) of Piry virus (PIRYV).